Here is a 221-residue protein sequence, read N- to C-terminus: Histone H1C (221 aa).

2 stretches are compositionally biased toward low complexity: residues 1–11 and 27–44; these read MTETAATETTP and KKAA…PSAS. Disordered regions lie at residues 1–44 and 123–221; these read MTET…PSAS and AKKK…AAKK. One can recognise an H15 domain in the interval 39–112; sequence SGPSASELIV…GASGSFKLNK (74 aa). Composition is skewed to basic residues over residues 123 to 150 and 158 to 221; these read AKKK…KPKK and SPKK…AAKK.

Belongs to the histone H1/H5 family.

The protein resides in the nucleus. Its subcellular location is the chromosome. Its function is as follows. Histones H1 are necessary for the condensation of nucleosome chains into higher-order structures. This chain is Histone H1C, found in Xenopus laevis (African clawed frog).